Consider the following 205-residue polypeptide: Thiamine-phosphate synthase (205 aa).

Residues 37-41 (QVREK) and Asn69 each bind 4-amino-2-methyl-5-(diphosphooxymethyl)pyrimidine. Mg(2+)-binding residues include Asp70 and Asp89. A 4-amino-2-methyl-5-(diphosphooxymethyl)pyrimidine-binding site is contributed by Ser108. A 2-[(2R,5Z)-2-carboxy-4-methylthiazol-5(2H)-ylidene]ethyl phosphate-binding site is contributed by 134–136 (TGS). Lys137 contacts 4-amino-2-methyl-5-(diphosphooxymethyl)pyrimidine. 2-[(2R,5Z)-2-carboxy-4-methylthiazol-5(2H)-ylidene]ethyl phosphate-binding positions include Gly165 and 185–186 (IS).

It belongs to the thiamine-phosphate synthase family. Mg(2+) serves as cofactor.

The enzyme catalyses 2-[(2R,5Z)-2-carboxy-4-methylthiazol-5(2H)-ylidene]ethyl phosphate + 4-amino-2-methyl-5-(diphosphooxymethyl)pyrimidine + 2 H(+) = thiamine phosphate + CO2 + diphosphate. It catalyses the reaction 2-(2-carboxy-4-methylthiazol-5-yl)ethyl phosphate + 4-amino-2-methyl-5-(diphosphooxymethyl)pyrimidine + 2 H(+) = thiamine phosphate + CO2 + diphosphate. The catalysed reaction is 4-methyl-5-(2-phosphooxyethyl)-thiazole + 4-amino-2-methyl-5-(diphosphooxymethyl)pyrimidine + H(+) = thiamine phosphate + diphosphate. It participates in cofactor biosynthesis; thiamine diphosphate biosynthesis; thiamine phosphate from 4-amino-2-methyl-5-diphosphomethylpyrimidine and 4-methyl-5-(2-phosphoethyl)-thiazole: step 1/1. Its function is as follows. Condenses 4-methyl-5-(beta-hydroxyethyl)thiazole monophosphate (THZ-P) and 2-methyl-4-amino-5-hydroxymethyl pyrimidine pyrophosphate (HMP-PP) to form thiamine monophosphate (TMP). The sequence is that of Thiamine-phosphate synthase from Clostridium botulinum (strain Kyoto / Type A2).